We begin with the raw amino-acid sequence, 211 residues long: Thiamine-phosphate synthase (211 aa).

4-amino-2-methyl-5-(diphosphooxymethyl)pyrimidine is bound by residues 37 to 41 and Asn69; that span reads QYRDK. 2 residues coordinate Mg(2+): Asp70 and Asp89. Ser108 serves as a coordination point for 4-amino-2-methyl-5-(diphosphooxymethyl)pyrimidine. Position 135–137 (135–137) interacts with 2-[(2R,5Z)-2-carboxy-4-methylthiazol-5(2H)-ylidene]ethyl phosphate; sequence SPT. Lys138 serves as a coordination point for 4-amino-2-methyl-5-(diphosphooxymethyl)pyrimidine. 2-[(2R,5Z)-2-carboxy-4-methylthiazol-5(2H)-ylidene]ethyl phosphate-binding positions include Gly165 and 185–186; that span reads LS.

Belongs to the thiamine-phosphate synthase family. The cofactor is Mg(2+).

It catalyses the reaction 2-[(2R,5Z)-2-carboxy-4-methylthiazol-5(2H)-ylidene]ethyl phosphate + 4-amino-2-methyl-5-(diphosphooxymethyl)pyrimidine + 2 H(+) = thiamine phosphate + CO2 + diphosphate. The enzyme catalyses 2-(2-carboxy-4-methylthiazol-5-yl)ethyl phosphate + 4-amino-2-methyl-5-(diphosphooxymethyl)pyrimidine + 2 H(+) = thiamine phosphate + CO2 + diphosphate. The catalysed reaction is 4-methyl-5-(2-phosphooxyethyl)-thiazole + 4-amino-2-methyl-5-(diphosphooxymethyl)pyrimidine + H(+) = thiamine phosphate + diphosphate. Its pathway is cofactor biosynthesis; thiamine diphosphate biosynthesis; thiamine phosphate from 4-amino-2-methyl-5-diphosphomethylpyrimidine and 4-methyl-5-(2-phosphoethyl)-thiazole: step 1/1. Functionally, condenses 4-methyl-5-(beta-hydroxyethyl)thiazole monophosphate (THZ-P) and 2-methyl-4-amino-5-hydroxymethyl pyrimidine pyrophosphate (HMP-PP) to form thiamine monophosphate (TMP). The protein is Thiamine-phosphate synthase of Thiobacillus denitrificans (strain ATCC 25259 / T1).